Here is a 134-residue protein sequence, read N- to C-terminus: uncharacterized protein (134 aa).

Transmembrane regions (helical) follow at residues 8 to 28, 54 to 74, and 113 to 133; these read FTSL…TVMY, GFQA…TFLL, and LACF…RLVD.

This sequence belongs to the cornichon family.

Its subcellular location is the endoplasmic reticulum membrane. This is an uncharacterized protein from Schizosaccharomyces pombe (strain 972 / ATCC 24843) (Fission yeast).